The following is a 146-amino-acid chain: Putative pre-16S rRNA nuclease (146 aa).

The protein belongs to the YqgF nuclease family.

The protein resides in the cytoplasm. In terms of biological role, could be a nuclease involved in processing of the 5'-end of pre-16S rRNA. This is Putative pre-16S rRNA nuclease from Paraburkholderia xenovorans (strain LB400).